We begin with the raw amino-acid sequence, 374 residues long: 4-hydroxy-3-methylbut-2-en-1-yl diphosphate synthase (flavodoxin) (374 aa).

Residues cysteine 270, cysteine 273, cysteine 305, and glutamate 312 each coordinate [4Fe-4S] cluster.

It belongs to the IspG family. [4Fe-4S] cluster serves as cofactor.

It carries out the reaction (2E)-4-hydroxy-3-methylbut-2-enyl diphosphate + oxidized [flavodoxin] + H2O + 2 H(+) = 2-C-methyl-D-erythritol 2,4-cyclic diphosphate + reduced [flavodoxin]. Its pathway is isoprenoid biosynthesis; isopentenyl diphosphate biosynthesis via DXP pathway; isopentenyl diphosphate from 1-deoxy-D-xylulose 5-phosphate: step 5/6. Converts 2C-methyl-D-erythritol 2,4-cyclodiphosphate (ME-2,4cPP) into 1-hydroxy-2-methyl-2-(E)-butenyl 4-diphosphate. This Vibrio cholerae serotype O1 (strain ATCC 39315 / El Tor Inaba N16961) protein is 4-hydroxy-3-methylbut-2-en-1-yl diphosphate synthase (flavodoxin).